The following is a 347-amino-acid chain: Nicotinate-nucleotide--dimethylbenzimidazole phosphoribosyltransferase (347 aa).

Residue E316 is the Proton acceptor of the active site.

Belongs to the CobT family.

The catalysed reaction is 5,6-dimethylbenzimidazole + nicotinate beta-D-ribonucleotide = alpha-ribazole 5'-phosphate + nicotinate + H(+). It functions in the pathway nucleoside biosynthesis; alpha-ribazole biosynthesis; alpha-ribazole from 5,6-dimethylbenzimidazole: step 1/2. Functionally, catalyzes the synthesis of alpha-ribazole-5'-phosphate from nicotinate mononucleotide (NAMN) and 5,6-dimethylbenzimidazole (DMB). This Vibrio campbellii (strain ATCC BAA-1116) protein is Nicotinate-nucleotide--dimethylbenzimidazole phosphoribosyltransferase.